A 243-amino-acid chain; its full sequence is Small ribosomal subunit protein uS2 (243 aa).

This sequence belongs to the universal ribosomal protein uS2 family.

This is Small ribosomal subunit protein uS2 from Pseudoalteromonas atlantica (strain T6c / ATCC BAA-1087).